Consider the following 629-residue polypeptide: Arginine--tRNA ligase (629 aa).

The short motif at 128–138 is the 'HIGH' region element; sequence VNPTKPLHMGH.

It belongs to the class-I aminoacyl-tRNA synthetase family.

It localises to the cytoplasm. It catalyses the reaction tRNA(Arg) + L-arginine + ATP = L-arginyl-tRNA(Arg) + AMP + diphosphate. This Pyrococcus furiosus (strain ATCC 43587 / DSM 3638 / JCM 8422 / Vc1) protein is Arginine--tRNA ligase.